The following is a 595-amino-acid chain: Tyrosine-protein phosphatase cdcA (595 aa).

Positions 32-57 are disordered; sequence TPFPYPAEQPKSPSKRRAQASPSKKR. A compositionally biased stretch (basic residues) spans 44–57; sequence PSKRRAQASPSKKR. A Tyrosine-protein phosphatase domain is found at 233 to 381; sequence LPSTVSEVRS…QGSFREWWFE (149 aa). C322 acts as the Phosphocysteine intermediate in catalysis. Positions 392-595 are disordered; sequence QPNPVTPGRS…GSPVRVKAQA (204 aa). Residues 449 to 461 are compositionally biased toward basic residues; the sequence is RKSHRKDSRHHPY. Positions 471 to 483 are enriched in basic and acidic residues; sequence VDKDTRKTRRSTD. Residues 502–526 show a composition bias toward polar residues; the sequence is SKSPAASPGQRSISYSATVTASYTL.

Belongs to the protein-tyrosine phosphatase family. Non-receptor class CDC14 subfamily.

The protein localises to the nucleus. It localises to the cytoplasm. Its subcellular location is the cell septum. It carries out the reaction O-phospho-L-tyrosyl-[protein] + H2O = L-tyrosyl-[protein] + phosphate. Functionally, protein phosphatase which antagonizes mitotic cyclin-dependent kinase nimX, the inactivation of which is essential for exit from mitosis. To access its substrates, is released from nucleolar sequestration during mitosis. Plays an essential in coordinating the nuclear division cycle with cytokinesis through the cytokinesis checkpoint. Involved in chromosome segregation, where it is required for meiosis I spindle dissambly as well as for establishing two consecutive chromosome segregation phases. Required for the transcription of the two major endoglucanase genes eglA and eglB and growth on synthetic cellulose as the sole carbon source. The sequence is that of Tyrosine-protein phosphatase cdcA (cdcA) from Emericella nidulans (strain FGSC A4 / ATCC 38163 / CBS 112.46 / NRRL 194 / M139) (Aspergillus nidulans).